A 625-amino-acid polypeptide reads, in one-letter code: Glucose dehydrogenase [FAD, quinone] (625 aa).

Residues 1 to 42 form the signal peptide; that stretch reads MSASASACDCLVGVPTGPTLASTCGGSAFMLFMGLLEVFIRS. FAD is bound at residue 66–95; that stretch reads DFIVIGGGSAGSVVASRLSEVPQWKVLLIE. The active-site Proton acceptor is the H544. A non-standard amino acid (selenocysteine) is located at residue U613.

It belongs to the GMC oxidoreductase family. FAD is required as a cofactor.

Its subcellular location is the secreted. It catalyses the reaction a quinone + D-glucose = D-glucono-1,5-lactone + a quinol. In terms of biological role, essential for cuticular modification during development. The polypeptide is Glucose dehydrogenase [FAD, quinone] (Gld) (Drosophila melanogaster (Fruit fly)).